Consider the following 336-residue polypeptide: MKVKGILPGLVTSLVIAIISQGLAQFVPALGAATIAILLGIIGGNTFLKQPQLGRGTKFAESKLLEYSVMLLGATMTVQTIGKIGGFGVLFILCQMTITIVGALWLGRKLGFSQSVRMLMAGGNAVCGSSAIASIAPVIDADEDDKGTVITLVNLMGTVLMLTLPVLGMAVFGGSVILKGALIGGTLQSVGQVVAAASMINQTTVQFATIFKIMRIMMLVVVVLIFGRLHQRTIENELAEDAVVSGNGNGHWLPWYVAGFLILCALNSLISLPAIIGATAHTISSWFEIIALAAIGLRLNLVNFMKAGKRLALYGLGVGTIQVVSALILITLLLQH.

Transmembrane regions (helical) follow at residues 5–22, 26–48, 84–106, 116–138, 150–172, 204–226, 255–277, 282–304, and 311–333; these read GILP…ISQG, FVPA…NTFL, IGGF…ALWL, VRML…IAPV, ITLV…MAVF, TVQF…VLIF, WYVA…AIIG, TISS…LVNF, and LALY…ITLL.

This sequence belongs to the UPF0324 family.

The protein localises to the cell membrane. In Lactiplantibacillus plantarum (strain ATCC BAA-793 / NCIMB 8826 / WCFS1) (Lactobacillus plantarum), this protein is UPF0324 membrane protein lp_2841.